Here is a 984-residue protein sequence, read N- to C-terminus: uncharacterized protein (984 aa).

This is an uncharacterized protein from Ostreid herpesvirus 1 (isolate France) (OsHV-1).